Reading from the N-terminus, the 298-residue chain is Calcium-binding protein 1 (298 aa).

Basic and acidic residues predominate over residues 1 to 10 (MSSHIAKSES). The tract at residues 1–131 (MSSHIAKSES…APAGTPEADP (131 aa)) is disordered. Ser2 carries the N-myristoyl glycine lipid modification. The S-palmitoyl cysteine moiety is linked to residue His4. The segment covering 11 to 25 (KTSLLKAAAASGGSR) has biased composition (low complexity). EF-hand domains lie at 153–188 (EEIE…MGYM), 207–224 (GHVD…KLLA), 230–265 (IGVK…LLGH), and 267–298 (VGHR…MMSR). Ca(2+)-binding residues include Asp166, Asp168, Asp170, Tyr172, and Asp177. The Ca(2+) site is built by Asp243, Asn245, Asp247, and Glu249. Ser251 is modified (phosphoserine). Positions 254, 280, 282, 284, 286, and 291 each coordinate Ca(2+).

Interacts with ITPR1, ITPR2 and ITPR3. The strength of this interaction inversely correlates with calcium concentration. Interacts with CACNA1A (via C-terminal CDB motif) in the pre- and postsynaptic membranes. Interacts with CACNA1C. Interacts with CACNA1D. Interacts (via EF-hands 1 and 2) at microtubules with MAP1LC3B. Interacts (via EF-hands 1 and 2) with NSMF (via the central NLS-containing motif region), the interaction occurs in a calcium dependent manner after synaptic NMDA receptor stimulation and prevents nuclear import of NSMF. Interacts with MYO1C and TRPC5. Interacts with SPACA9. Post-translationally, phosphorylated. The phosphorylation regulates the activity. Somatodendritic compartment of neurons. Restricted expression in retina to a subpopulation of amacrine, bipolar, and ganglion cells. According to PubMed:11906216, expression is heterogeneous within brain regions and their major cell types and does not match with those of marker proteins for characterized neuronal subpopulations. Isoform 2: Minor isoform expressed in the brain, in the granule cell layer of the cerebellum, at low level. Not developmentally regulated. Isoform 3: Minor isoform expressed in the brain, in the granule cell layer. of the cerebellum, at low level. Not developmentally regulated.

The protein localises to the cytoplasm. It is found in the cytoskeleton. Its function is as follows. Modulates calcium-dependent activity of inositol 1,4,5-triphosphate receptors (ITPRs). Inhibits agonist-induced intracellular calcium signaling. Enhances inactivation and does not support calcium-dependent facilitation of voltage-dependent P/Q-type calcium channels. Causes calcium-dependent facilitation and inhibits inactivation of L-type calcium channels by binding to the same sites as calmodulin in the C-terminal domain of CACNA1C, but has an opposite effect on channel function. Suppresses the calcium-dependent inactivation of CACNA1D. Inhibits TRPC5 channels. Prevents NMDA receptor-induced cellular degeneration. Required for the normal transfer of light signals through the retina. This chain is Calcium-binding protein 1 (Cabp1), found in Rattus norvegicus (Rat).